Reading from the N-terminus, the 90-residue chain is MNVVPSRPEVSRGSPKSPLREHVAQVVRRYLRDLDGCDANDLYNMVLREMEIPLLVEVLNHCEGNQSRAAALLGIHRATLRKKLKEYGLV.

Positions 66–85 (QSRAAALLGIHRATLRKKLK) form a DNA-binding region, H-T-H motif.

The protein belongs to the transcriptional regulatory Fis family.

The polypeptide is Putative Fis-like DNA-binding protein (Xylella fastidiosa (strain Temecula1 / ATCC 700964)).